The primary structure comprises 153 residues: Acylphosphatase-like protein MJ0553 (153 aa).

In terms of domain architecture, Acylphosphatase-like spans 4-102 (TYELIIYGRV…SRLSSDDILE (99 aa)).

The polypeptide is Acylphosphatase-like protein MJ0553 (Methanocaldococcus jannaschii (strain ATCC 43067 / DSM 2661 / JAL-1 / JCM 10045 / NBRC 100440) (Methanococcus jannaschii)).